The primary structure comprises 245 residues: tRNA1(Val) (adenine(37)-N6)-methyltransferase (245 aa).

Belongs to the methyltransferase superfamily. tRNA (adenine-N(6)-)-methyltransferase family.

It is found in the cytoplasm. It catalyses the reaction adenosine(37) in tRNA1(Val) + S-adenosyl-L-methionine = N(6)-methyladenosine(37) in tRNA1(Val) + S-adenosyl-L-homocysteine + H(+). Specifically methylates the adenine in position 37 of tRNA(1)(Val) (anticodon cmo5UAC). This Salmonella paratyphi A (strain ATCC 9150 / SARB42) protein is tRNA1(Val) (adenine(37)-N6)-methyltransferase.